The following is a 217-amino-acid chain: tRNA (guanine-N(7)-)-methyltransferase (217 aa).

The S-adenosyl-L-methionine site is built by Glu-56, Glu-81, Asp-108, and Asp-130. The active site involves Asp-130. Residues Lys-134 and Asp-166 each contribute to the substrate site.

Belongs to the class I-like SAM-binding methyltransferase superfamily. TrmB family.

It carries out the reaction guanosine(46) in tRNA + S-adenosyl-L-methionine = N(7)-methylguanosine(46) in tRNA + S-adenosyl-L-homocysteine. The protein operates within tRNA modification; N(7)-methylguanine-tRNA biosynthesis. In terms of biological role, catalyzes the formation of N(7)-methylguanine at position 46 (m7G46) in tRNA. This chain is tRNA (guanine-N(7)-)-methyltransferase, found in Neorickettsia sennetsu (strain ATCC VR-367 / Miyayama) (Ehrlichia sennetsu).